Consider the following 477-residue polypeptide: Histidine--tRNA ligase (477 aa).

It belongs to the class-II aminoacyl-tRNA synthetase family. In terms of assembly, homodimer.

The protein localises to the cytoplasm. It catalyses the reaction tRNA(His) + L-histidine + ATP = L-histidyl-tRNA(His) + AMP + diphosphate + H(+). The protein is Histidine--tRNA ligase of Xanthomonas campestris pv. campestris (strain 8004).